An 87-amino-acid chain; its full sequence is Small ribosomal subunit protein bS20 (87 aa).

The interval 1–22 is disordered; sequence MANSAGSKKRARQAVKSRAHNG. Positions 7 to 19 are enriched in basic residues; it reads SKKRARQAVKSRA.

Belongs to the bacterial ribosomal protein bS20 family.

Binds directly to 16S ribosomal RNA. This Marinomonas sp. (strain MWYL1) protein is Small ribosomal subunit protein bS20.